The following is a 119-amino-acid chain: Holo-[acyl-carrier-protein] synthase (119 aa).

Mg(2+)-binding residues include Asp-5 and Glu-51.

Belongs to the P-Pant transferase superfamily. AcpS family. Mg(2+) serves as cofactor.

It localises to the cytoplasm. It carries out the reaction apo-[ACP] + CoA = holo-[ACP] + adenosine 3',5'-bisphosphate + H(+). Transfers the 4'-phosphopantetheine moiety from coenzyme A to a Ser of acyl-carrier-protein. This chain is Holo-[acyl-carrier-protein] synthase, found in Helicobacter pylori (strain J99 / ATCC 700824) (Campylobacter pylori J99).